Consider the following 335-residue polypeptide: Phenylalanine--tRNA ligase alpha subunit (335 aa).

Glu262 contributes to the Mg(2+) binding site.

It belongs to the class-II aminoacyl-tRNA synthetase family. Phe-tRNA synthetase alpha subunit type 1 subfamily. In terms of assembly, tetramer of two alpha and two beta subunits. Requires Mg(2+) as cofactor.

It is found in the cytoplasm. It catalyses the reaction tRNA(Phe) + L-phenylalanine + ATP = L-phenylalanyl-tRNA(Phe) + AMP + diphosphate + H(+). This is Phenylalanine--tRNA ligase alpha subunit from Prochlorococcus marinus (strain MIT 9313).